A 384-amino-acid chain; its full sequence is Putative exopolyphosphatase (384 aa).

Mn(2+)-binding residues include D40, D42, D116, H138, and D200.

Belongs to the PPase class C family. The cofactor is Mn(2+).

It carries out the reaction [phosphate](n) + H2O = [phosphate](n-1) + phosphate + H(+). In terms of biological role, degradation of inorganic polyphosphates. The polypeptide is Putative exopolyphosphatase (Schizosaccharomyces pombe (strain 972 / ATCC 24843) (Fission yeast)).